Here is a 256-residue protein sequence, read N- to C-terminus: Type III pantothenate kinase (256 aa).

6–13 contributes to the ATP binding site; it reads DVGNSHIY. Substrate is bound by residues Tyr-99 and 106 to 109; that span reads GADR. Asp-108 (proton acceptor) is an active-site residue. Asp-129 is a K(+) binding site. Thr-132 lines the ATP pocket. Thr-184 contacts substrate.

This sequence belongs to the type III pantothenate kinase family. In terms of assembly, homodimer. It depends on NH4(+) as a cofactor. K(+) is required as a cofactor.

Its subcellular location is the cytoplasm. The enzyme catalyses (R)-pantothenate + ATP = (R)-4'-phosphopantothenate + ADP + H(+). The protein operates within cofactor biosynthesis; coenzyme A biosynthesis; CoA from (R)-pantothenate: step 1/5. Functionally, catalyzes the phosphorylation of pantothenate (Pan), the first step in CoA biosynthesis. This chain is Type III pantothenate kinase, found in Legionella pneumophila (strain Paris).